A 143-amino-acid chain; its full sequence is MELNSIQPADGAKHYKRRVGRGIGSGLGKTSGRGHKGQKSRSGGFHKVGFEGGQMPLQRRLPKRGFKSLATPYKAEVRLSDLEALPVTEIDILALKQAGVIGELARVVRVILSGSITKKVTVKGLIATKGAKAAIEAAGGSVA.

The segment at Met1–Gly52 is disordered. Residues Arg21–Ser31 are compositionally biased toward gly residues.

It belongs to the universal ribosomal protein uL15 family. In terms of assembly, part of the 50S ribosomal subunit.

Its function is as follows. Binds to the 23S rRNA. The polypeptide is Large ribosomal subunit protein uL15 (Janthinobacterium sp. (strain Marseille) (Minibacterium massiliensis)).